The sequence spans 586 residues: UvrABC system protein C (586 aa).

A GIY-YIG domain is found at 17-94 (HKPGCYLWKD…IKQYKPRFNL (78 aa)). Residues 201–236 (EQVLNHLQQQEIKASEQQNFEAARHFLDLQKAVLEL) form the UVR domain.

It belongs to the UvrC family. As to quaternary structure, interacts with UvrB in an incision complex.

It is found in the cytoplasm. The UvrABC repair system catalyzes the recognition and processing of DNA lesions. UvrC both incises the 5' and 3' sides of the lesion. The N-terminal half is responsible for the 3' incision and the C-terminal half is responsible for the 5' incision. The polypeptide is UvrABC system protein C (Mycoplasma pneumoniae (strain ATCC 29342 / M129 / Subtype 1) (Mycoplasmoides pneumoniae)).